Consider the following 204-residue polypeptide: UPF0637 protein lwe1043 (204 aa).

The protein belongs to the UPF0637 family.

The sequence is that of UPF0637 protein lwe1043 from Listeria welshimeri serovar 6b (strain ATCC 35897 / DSM 20650 / CCUG 15529 / CIP 8149 / NCTC 11857 / SLCC 5334 / V8).